Reading from the N-terminus, the 419-residue chain is UDP-N-acetylmuramoylalanine--D-glutamate ligase (419 aa).

Residue 109–115 (GSTGKTT) coordinates ATP.

The protein belongs to the MurCDEF family.

The protein localises to the cytoplasm. The enzyme catalyses UDP-N-acetyl-alpha-D-muramoyl-L-alanine + D-glutamate + ATP = UDP-N-acetyl-alpha-D-muramoyl-L-alanyl-D-glutamate + ADP + phosphate + H(+). The protein operates within cell wall biogenesis; peptidoglycan biosynthesis. Its function is as follows. Cell wall formation. Catalyzes the addition of glutamate to the nucleotide precursor UDP-N-acetylmuramoyl-L-alanine (UMA). The sequence is that of UDP-N-acetylmuramoylalanine--D-glutamate ligase from Chlamydia felis (strain Fe/C-56) (Chlamydophila felis).